A 260-amino-acid chain; its full sequence is Putative imidazole glycerol phosphate synthase subunit hisF3 (260 aa).

The active site involves aspartate 135.

It belongs to the HisA/HisF family. In terms of assembly, heterodimer of HisH and HisF.

The protein resides in the cytoplasm. The enzyme catalyses 5-[(5-phospho-1-deoxy-D-ribulos-1-ylimino)methylamino]-1-(5-phospho-beta-D-ribosyl)imidazole-4-carboxamide + L-glutamine = D-erythro-1-(imidazol-4-yl)glycerol 3-phosphate + 5-amino-1-(5-phospho-beta-D-ribosyl)imidazole-4-carboxamide + L-glutamate + H(+). It participates in amino-acid biosynthesis; L-histidine biosynthesis; L-histidine from 5-phospho-alpha-D-ribose 1-diphosphate: step 5/9. Its function is as follows. IGPS catalyzes the conversion of PRFAR and glutamine to IGP, AICAR and glutamate. The HisF subunit catalyzes the cyclization activity that produces IGP and AICAR from PRFAR using the ammonia provided by the HisH subunit. This Vibrio vulnificus (strain YJ016) protein is Putative imidazole glycerol phosphate synthase subunit hisF3 (hisF3).